We begin with the raw amino-acid sequence, 443 residues long: Chromosome partition protein MukF (443 aa).

The tract at residues 209 to 237 (LDETSINLRELQDTLNAAGDKLQSQLLRI) is leucine-zipper.

This sequence belongs to the MukF family. Interacts, and probably forms a ternary complex, with MukE and MukB via its C-terminal region. The complex formation is stimulated by calcium or magnesium. It is required for an interaction between MukE and MukB.

It is found in the cytoplasm. The protein localises to the nucleoid. Functionally, involved in chromosome condensation, segregation and cell cycle progression. May participate in facilitating chromosome segregation by condensation DNA from both sides of a centrally located replisome during cell division. Not required for mini-F plasmid partitioning. Probably acts via its interaction with MukB and MukE. Overexpression results in anucleate cells. It has a calcium binding activity. The sequence is that of Chromosome partition protein MukF from Haemophilus ducreyi (strain 35000HP / ATCC 700724).